Here is a 361-residue protein sequence, read N- to C-terminus: 1-deoxy-D-xylulose 5-phosphate reductoisomerase (361 aa).

6 residues coordinate NADPH: threonine 12, glycine 13, serine 14, isoleucine 15, glycine 38, and asparagine 102. Lysine 103 provides a ligand contact to 1-deoxy-D-xylulose 5-phosphate. An NADPH-binding site is contributed by glutamate 104. Aspartate 126 contacts Mn(2+). 1-deoxy-D-xylulose 5-phosphate contacts are provided by serine 127, glutamate 128, serine 152, and histidine 175. Glutamate 128 is a Mn(2+) binding site. Glycine 181 is an NADPH binding site. Residues serine 188, asparagine 193, lysine 194, and glutamate 197 each contribute to the 1-deoxy-D-xylulose 5-phosphate site. Glutamate 197 contacts Mn(2+).

Belongs to the DXR family. Mg(2+) is required as a cofactor. It depends on Mn(2+) as a cofactor.

It carries out the reaction 2-C-methyl-D-erythritol 4-phosphate + NADP(+) = 1-deoxy-D-xylulose 5-phosphate + NADPH + H(+). Its pathway is isoprenoid biosynthesis; isopentenyl diphosphate biosynthesis via DXP pathway; isopentenyl diphosphate from 1-deoxy-D-xylulose 5-phosphate: step 1/6. Its function is as follows. Catalyzes the NADPH-dependent rearrangement and reduction of 1-deoxy-D-xylulose-5-phosphate (DXP) to 2-C-methyl-D-erythritol 4-phosphate (MEP). This chain is 1-deoxy-D-xylulose 5-phosphate reductoisomerase, found in Leifsonia xyli subsp. xyli (strain CTCB07).